Reading from the N-terminus, the 428-residue chain is Probable RNase MJ4 (428 aa).

Residues His-57, His-59, Asp-61, His-62, His-143, Asp-165, and His-397 each contribute to the Zn(2+) site.

It belongs to the metallo-beta-lactamase superfamily. RNA-metabolizing metallo-beta-lactamase-like family. Zn(2+) serves as cofactor.

Functionally, probably an RNase. This is Probable RNase MJ4 from Methanocaldococcus jannaschii (strain ATCC 43067 / DSM 2661 / JAL-1 / JCM 10045 / NBRC 100440) (Methanococcus jannaschii).